We begin with the raw amino-acid sequence, 572 residues long: Glutathione hydrolase 5 proenzyme (572 aa).

The Cytoplasmic segment spans residues 1–6 (MAWGHR). A helical; Signal-anchor for type II membrane protein membrane pass occupies residues 7–29 (TTVCLVLLGVSLGLAIIVLAVVL). The Extracellular portion of the chain corresponds to 30 to 572 (PHHQASCRPD…LRKAGKASGY (543 aa)). The N-linked (GlcNAc...) asparagine glycan is linked to asparagine 98. Arginine 110 contributes to the L-glutamate binding site. Residues asparagine 185, asparagine 194, asparagine 204, asparagine 277, asparagine 303, asparagine 347, and asparagine 377 are each glycosylated (N-linked (GlcNAc...) asparagine). Threonine 388 acts as the Nucleophile in catalysis. Residues threonine 406, glutamate 427, and 453–454 (SS) contribute to the L-glutamate site.

This sequence belongs to the gamma-glutamyltransferase family. In terms of assembly, heterodimer composed of the light and heavy chains. The active site is located in the light chain. In terms of processing, cleaved by autocatalysis into a large and a small subunit. Post-translationally, glycosylated. As to expression, widely expressed, but at low level, except in the airway epithelial cells. Detected in brain, heart, kidney, liver, lung, spleen, testis and trachea.

Its subcellular location is the membrane. It catalyses the reaction glutathione + H2O = L-cysteinylglycine + L-glutamate. The catalysed reaction is an S-substituted glutathione + H2O = an S-substituted L-cysteinylglycine + L-glutamate. It carries out the reaction leukotriene C4 + H2O = leukotriene D4 + L-glutamate. The enzyme catalyses S-[(2E,6E,10E)-geranylgeranyl]-L-glutathione + H2O = S-[(2E,6E,10E)-geranylgeranyl]-L-cysteinylglycine + L-glutamate. It catalyses the reaction an N-terminal (5-L-glutamyl)-[peptide] + an alpha-amino acid = 5-L-glutamyl amino acid + an N-terminal L-alpha-aminoacyl-[peptide]. Its pathway is lipid metabolism; leukotriene D4 biosynthesis. It functions in the pathway sulfur metabolism; glutathione metabolism. Its activity is regulated as follows. Inhibited by serine-borate. Cleaves the gamma-glutamyl bond of extracellular glutathione tripeptide (gamma-Glu-Cys-Gly) and certain glutathione conjugates. Hydrolyzes glutathione releasing L-Glu and Cys-Gly dipeptide which is further metabolized to maintain extracellular cysteine levels but also to provide cysteine necessary for intracellular glutathione synthesis. Among glutathione-S-conjugates metabolizes leukotriene C4 (LTC4) and S-geranylgeranyl-glutathione (GGG), but is inactive toward gamma-glutamyl leucine. Converts extracellular LTC4 to LTD4 during acute inflammatory response. Acts as a negative regulator of GGG bioactivity. GGT5 (via GGG catabolism) and ABCC1 (via extracellular transport) establish GGG gradients within lymphoid tissues to position P2RY8-positive lymphocytes at germinal centers in lymphoid follicles and restrict their chemotactic transmigration from blood vessels to bone marrow parenchyma. The transpeptidation reaction, i.e. the transfer of gamma-glutamyl moiety to an acceptor molecule to yield a new gamma-glutamyl compound requires high concentration of dipeptide acceptor and is considered nonphysiological. This Rattus norvegicus (Rat) protein is Glutathione hydrolase 5 proenzyme (Ggt5).